The primary structure comprises 249 residues: tRNA 2'-phosphotransferase 1 (249 aa).

Methionine 1 is subject to N-acetylmethionine. Disordered stretches follow at residues 1 to 25 (MNAP…RNVQ) and 220 to 249 (KPLS…KIQQ).

This sequence belongs to the KptA/TPT1 family.

It catalyses the reaction 2'-phospho-[ligated tRNA] + NAD(+) = mature tRNA + ADP-alpha-D-ribose 1'',2''-cyclic phosphate + nicotinamide. Functionally, catalyzes the last step of tRNA splicing, the transfer of the splice junction 2'-phosphate from ligated tRNA to NAD to produce ADP-ribose 1''-2'' cyclic phosphate. This chain is tRNA 2'-phosphotransferase 1 (Trpt1), found in Mus musculus (Mouse).